The chain runs to 241 residues: MNVENQTPNVDHQEIAKFEAIASRWWDLEGEFKPLHRINPLRLGYISQRAEGLFGKKVLDVGCGGGILAESMAREGADVTGLDMGAEPLQVARLHALESGVTVDYVQETVEAHADAHSGLYDVVTCMEMLEHVPDPQSVVQACAKLVKPGGHVFFSTINRNAKAWMMAVIGAEYILKMVPRGTHDIKKFIRPAELMRWVDDTPLRERHITGLHYNLLTDRFKLGPNVDVNYMLHTSHDKQC.

S-adenosyl-L-methionine-binding residues include arginine 42, glycine 62, aspartate 83, and methionine 127.

It belongs to the methyltransferase superfamily. UbiG/COQ3 family.

The catalysed reaction is a 3-demethylubiquinol + S-adenosyl-L-methionine = a ubiquinol + S-adenosyl-L-homocysteine + H(+). It carries out the reaction a 3-(all-trans-polyprenyl)benzene-1,2-diol + S-adenosyl-L-methionine = a 2-methoxy-6-(all-trans-polyprenyl)phenol + S-adenosyl-L-homocysteine + H(+). It functions in the pathway cofactor biosynthesis; ubiquinone biosynthesis. In terms of biological role, O-methyltransferase that catalyzes the 2 O-methylation steps in the ubiquinone biosynthetic pathway. This is Ubiquinone biosynthesis O-methyltransferase from Pectobacterium atrosepticum (strain SCRI 1043 / ATCC BAA-672) (Erwinia carotovora subsp. atroseptica).